A 499-amino-acid chain; its full sequence is MSTLGDLLAEHTMLPGSAVDHLHAVVGEWQMLSDLSFADYLMWVRRDDGVLVCVAQIRPNTAPTVLLADSVGKLAGPDDLPVVTMAFESGAIGRGSDKAGQGSRTRPGLDVEAVPVRHQGQVVAVLTHQTALAERRLTSPLEGAYLDCANDLLHMLAEGTFPNIGDLAMSRSSPRVGDGFIRLNEGGEVVFASPNAISAYHRMGLNSELDGHNLVAITRPLISDPFEAQELANHIRDSLAGGSSMRMEVDANGAAILLRTLPLVAGGKSLGAAVLIRDVTEVKRRDRALLSKDATIREIHHRVKNNLQTVAALLRLQARRTSNEEAREALIESVRRVTSIALVHDALSMSVDEEVNLDQVVDRILPIMNDVASVDTPIRINRVGNLGVLDADRATALIMVITELVQNAIEHAFDAKTEQGCVTIKAERSARWLDVVVHDDGRGLPVGFSLEKSDRLGLQIVRTLVTAELDGSLGMHDVPSGGTDVVLRVPIGRRSRGAQ.

The GAF stretch occupies residues 4–149 (LGDLLAEHTM…PLEGAYLDCA (146 aa)). The PAS-like stretch occupies residues 178–289 (DGFIRLNEGG…TEVKRRDRAL (112 aa)). Residues 298-493 (EIHHRVKNNL…DVVLRVPIGR (196 aa)) enclose the Histidine kinase domain. Residue histidine 301 is modified to Phosphohistidine; by autocatalysis.

Post-translationally, autophosphorylated.

It is found in the cytoplasm. It carries out the reaction ATP + protein L-histidine = ADP + protein N-phospho-L-histidine.. Its function is as follows. Member of the two-component regulatory system PdtaR/PdtaS. This two-component system plays an essential role in mycobacterial adaptation to poor nutrient conditions. Nutrient deprivation results in increasing intracellular concentrations of cyclic diguanosine monophosphate (c-di-GMP), which binds to the PdtaS sensor and promotes its autophosphorylation, leading to the activation of the signaling cascade. The phosphate group is then transferred to PdtaR. This is Sensor histidine kinase PdtaS from Mycolicibacterium smegmatis (strain ATCC 700084 / mc(2)155) (Mycobacterium smegmatis).